A 331-amino-acid chain; its full sequence is MNTLFAVTLVFVGCCSNVVFLELLVRDFPGCGNIVTFAQFAFIALEGFIFETNFGRKKPQIPLSNYVIMVTMFFTVSVINNYALDFNIAMPLHMIFRSGSLIANMILGIIILKNRYSMSKYLSIVLVSVGIFICTIMSAKQVNVEKGGTEEDGVYAFMHWLLGIAMLTFALLMSARMGIFQETLYKKYGKHSKEALFYNHCLPLPGFLLLSTNIYNHAVLFSQSPPMEVPVIGLSMPVMWFYLLMNVITQYVCIRGVFILTTECASLTVTLVVTLRKFLSLIISILYFQNPFTAWHWVGTAVVFLGTLLYTEVLSSIPAAFKGYKVDKKAE.

The next 10 membrane-spanning stretches (helical) occupy residues 5 to 25 (FAVT…ELLV), 30 to 50 (GCGN…GFIF), 59 to 79 (PQIP…VSVI), 92 to 112 (LHMI…IIIL), 122 to 142 (LSIV…AKQV), 153 to 173 (GVYA…ALLM), 201 to 221 (CLPL…AVLF), 238 to 260 (VMWF…VFIL), 267 to 289 (LTVT…LYFQ), and 301 to 321 (AVVF…PAAF).

The protein belongs to the nucleotide-sugar transporter family. SLC35B subfamily.

Its subcellular location is the golgi apparatus membrane. In terms of biological role, sugar transporter that specifically mediates the transport of UDP-xylose (UDP-Xyl) and UDP-N-acetylglucosamine (UDP-GlcNAc) from cytosol into Golgi. This is UDP-xylose and UDP-N-acetylglucosamine transporter (slc35b4) from Danio rerio (Zebrafish).